A 294-amino-acid chain; its full sequence is Survival motor neuron protein (294 aa).

Positions 1-10 are enriched in gly residues; the sequence is MAMSSGGSGS. The disordered stretch occupies residues 1 to 32; sequence MAMSSGGSGSGVPEQEDAVLFRRGTGQSDDSD. Ala2 is subject to N-acetylalanine. Phosphoserine; by PKA is present on residues Ser4, Ser5, and Ser8. Residues 13-44 are P1 (binding site for GEMIN2); that stretch reads PEQEDAVLFRRGTGQSDDSDIWDDTALIKAYD. The residue at position 25 (Thr25) is a Phosphothreonine. Residues Ser28 and Ser31 each carry the phosphoserine modification. Lys51 participates in a covalent cross-link: Glycyl lysine isopeptide (Lys-Gly) (interchain with G-Cter in SUMO2). The interval 60–88 is disordered; it reads CETSGKSKTTPKRKPAKKNKSQKKNTAAS. The segment covering 68–82 has biased composition (basic residues); that stretch reads TTPKRKPAKKNKSQK. Thr69 carries the phosphothreonine modification. Thr85 bears the Phosphothreonine; by PKA mark. Positions 91 to 151 constitute a Tudor domain; that stretch reads QWKVGDKCSA…LSPICEVANN (61 aa). Residues 97-209 are required for interaction with RPP20/POP7; that stretch reads KCSAIWSEDG…MPGPRLGPGK (113 aa). The segment covering 156 to 166 has biased composition (low complexity); sequence AQENENESQVS. Residues 156-222 form a disordered region; it reads AQENENESQV…KFNGPPPPPP (67 aa). At Ser187 the chain carries Phosphoserine; by PKA. The span at 194 to 204 shows a compositional bias: pro residues; it reads LPPPPPMPGPR. Residues 206–215 are compositionally biased toward low complexity; sequence GPGKPGLKFN. Residue Lys209 forms a Glycyl lysine isopeptide (Lys-Gly) (interchain with G-Cter in SUMO2) linkage. Residues 240–267 are P2 (binding site for SM B); that stretch reads PPIIPPPPPICPDSLDDADALGSMLISW. The interval 279 to 294 is required for interaction with SYNCRIP; sequence GFRQNQKEGRCSHSLN.

The protein belongs to the SMN family. In terms of assembly, homooligomer; may form higher order homooligomers in the dimer to octamer range. Part of the core SMN complex that contains SMN1, GEMIN2/SIP1, DDX20/GEMIN3, GEMIN4, GEMIN5, GEMIN6, GEMIN7, GEMIN8 and STRAP/UNRIP. Part of the SMN-Sm complex that contains SMN1, GEMIN2/SIP1, DDX20/GEMIN3, GEMIN4, GEMIN5, GEMIN6, GEMIN7, GEMIN8, STRAP/UNRIP and the Sm proteins SNRPB, SNRPD1, SNRPD2, SNRPD3, SNRPE, SNRPF and SNRPG. Component of an import snRNP complex composed of KPNB1, RNUT1, SMN1 and ZNF259. Interacts with DDX20, FBL, NOLA1, RNUT1, SYNCRIP and with several spliceosomal snRNP core Sm proteins, including SNRPB, SNRPD1, SNRPD2, SNRPD3, SNRPE and ILF3. Interacts with GEMIN2; the interaction is direct. Interacts with GEMIN3; the interaction is direct. Interacts with GEMIN8; the interaction is direct. Interacts with SNRPB; the interaction is direct. Interacts (via Tudor domain) with SNRPD1 (via C-terminus); the interaction is direct. Interacts with SNRPD2; the interaction is direct. Interacts (via Tudor domain) with SNRPD3 (via C-terminus); the interaction is direct. Interacts with SNRPE; the interaction is direct. Interacts with OSTF1, LSM10, LSM11 and RPP20/POP7. Interacts (via C-terminal region) with ZPR1 (via C-terminal region). Interacts (via Tudor domain) with COIL. Interacts with SETX; recruits SETX to POLR2A. Interacts with POLR2A (via the C-terminal domain (CTD)). Interacts with PRMT5. Interacts with XRN2. Interacts (via C-terminus) with FMR1 (via C-terminus); the interaction is direct and occurs in a RNA-independent manner. Interacts (via Tudor domain) with SF3B2 ('Arg-508'-methylated form). Interacts with WRAP53/TCAB1. Interacts (via Tudor domain) with ELAVL4 in an RNA-independent manner; the interaction is required for localization of ELAVL4 to RNA granules. Interacts with FRG1.

It is found in the nucleus. Its subcellular location is the gem. The protein resides in the cajal body. It localises to the cytoplasm. The protein localises to the cytoplasmic granule. It is found in the perikaryon. Its subcellular location is the cell projection. The protein resides in the neuron projection. It localises to the axon. The protein localises to the myofibril. It is found in the sarcomere. Its subcellular location is the z line. Functionally, the SMN complex catalyzes the assembly of small nuclear ribonucleoproteins (snRNPs), the building blocks of the spliceosome, and thereby plays an important role in the splicing of cellular pre-mRNAs. Most spliceosomal snRNPs contain a common set of Sm proteins SNRPB, SNRPD1, SNRPD2, SNRPD3, SNRPE, SNRPF and SNRPG that assemble in a heptameric protein ring on the Sm site of the small nuclear RNA to form the core snRNP (Sm core). In the cytosol, the Sm proteins SNRPD1, SNRPD2, SNRPE, SNRPF and SNRPG are trapped in an inactive 6S pICln-Sm complex by the chaperone CLNS1A that controls the assembly of the core snRNP. To assemble core snRNPs, the SMN complex accepts the trapped 5Sm proteins from CLNS1A forming an intermediate. Binding of snRNA inside 5Sm ultimately triggers eviction of the SMN complex, thereby allowing binding of SNRPD3 and SNRPB to complete assembly of the core snRNP. Within the SMN complex, SMN1 acts as a structural backbone and together with GEMIN2 it gathers the Sm complex subunits. Ensures the correct splicing of U12 intron-containing genes that may be important for normal motor and proprioceptive neurons development. Also required for resolving RNA-DNA hybrids created by RNA polymerase II, that form R-loop in transcription terminal regions, an important step in proper transcription termination. May also play a role in the metabolism of small nucleolar ribonucleoprotein (snoRNPs). This chain is Survival motor neuron protein (SMN1), found in Pongo abelii (Sumatran orangutan).